We begin with the raw amino-acid sequence, 242 residues long: Dehydration-responsive element-binding protein 1J (242 aa).

A compositionally biased stretch (low complexity) spans 20–29; sequence SSATTAATAT. The disordered stretch occupies residues 20 to 44; it reads SSATTAATATGPASPKRPAGRTKFQ. Positions 50–109 form a DNA-binding region, AP2/ERF; sequence VFRGVRRRGRAGRWVCEVRVPGSRGDRLWVGTFDTAEEAARAHDAAMLAMCGASASLNFT. The segment at 143–184 is disordered; sequence FQRRGSTAATATATSGDAASTAPPSSSPVLSPNDDNASSAST. Residues 148–184 show a composition bias toward low complexity; that stretch reads STAATATATSGDAASTAPPSSSPVLSPNDDNASSAST.

The protein belongs to the AP2/ERF transcription factor family. ERF subfamily.

The protein localises to the nucleus. Its function is as follows. Transcriptional activator that binds specifically to the DNA sequence 5'-[AG]CCGAC-3'. Binding to the C-repeat/DRE element mediates high salinity- and dehydration-inducible transcription. This chain is Dehydration-responsive element-binding protein 1J (DREB1J), found in Oryza sativa subsp. indica (Rice).